The sequence spans 1158 residues: Adipocyte enhancer-binding protein 1 (1158 aa).

Residues 1-25 (MAAVRGAPLLSCLLALLALCPGGRP) form the signal peptide. The disordered stretch occupies residues 41–387 (FLSELEPEPR…TPTEKVKCPP (347 aa)). A compositionally biased stretch (acidic residues) spans 45 to 55 (LEPEPREDDVE). Over residues 100 to 110 (DKGPKVPKESL) the composition is skewed to basic and acidic residues. Positions 116 to 166 (PPKKGKEKPPKATKKPKEKPPKATKKPKEKPPKATKKPKEKPPKATKKPPS) are enriched in basic residues. Pro residues predominate over residues 182–192 (PLPPPPSPGPE). A compositionally biased stretch (low complexity) spans 193–202 (ELPQEGGAPL). Residues 211 to 223 (EETHVEAREHQPE) show a composition bias toward basic and acidic residues. Residues 252 to 266 (RQKQPRPPPSRRRRP) show a composition bias toward basic residues. A compositionally biased stretch (basic and acidic residues) spans 267–289 (ERVWPEPPEEKAPAPAPEERIEP). Over residues 290 to 300 (PVKPLLPPLPP) the composition is skewed to pro residues. A compositionally biased stretch (basic and acidic residues) spans 326 to 371 (PDAERQTDEEKEELKKPKKEDSSPKEETDKWAVEKGKDHKEPRKGE). The F5/8 type C domain maps to 383 to 540 (VKCPPIGMES…LCMRLEVLGC (158 aa)). The interval 390–555 (MESHRIEDNQ…YSYYAQNEVV (166 aa)) is required for DNA-binding and interaction with NFKBIA. Residues 421–624 (TGATEDDYYD…EPEFRYTAGI (204 aa)) are interaction with MAPK1 and MAPK3. N528 carries an N-linked (GlcNAc...) asparagine glycan. The segment at 555–985 (VATDDLDFRH…TQCNFILARS (431 aa)) is interaction with PTEN. The 342-residue stretch at 563-904 (RHHSYKDMRQ…EALLTFMEQV (342 aa)) folds into the Peptidase M14 domain. The N-linked (GlcNAc...) asparagine glycan is linked to N922. Residues 941 to 1158 (DYWRILNPGE…ETYTVNFGDF (218 aa)) are required for transcriptional repression. The interval 1006–1158 (DPSRPMTPQQ…ETYTVNFGDF (153 aa)) is interaction with MAPK1 and MAPK3. Over residues 1108 to 1137 (EFETQLEPEFETQLEPEFEEEEEEEKEEEI) the composition is skewed to acidic residues. Residues 1108 to 1141 (EFETQLEPEFETQLEPEFEEEEEEEKEEEIATGQ) form a disordered region.

Belongs to the peptidase M14 family. As to quaternary structure, isoform 1: Interacts with different types of collagen, including collagens I, III, and V. Isoform 2: Interacts with GNG5, NFKBIA, MAPK1, MAPK3 and PTEN. Interaction with MAPK1 may stimulate DNA-binding. May interact with calmodulin. Binds to DNA in vitro. Post-translationally, phosphorylated by MAPK1 in vitro. In terms of tissue distribution, expressed in osteoblast and visceral fat.

It is found in the secreted. Its subcellular location is the cytoplasm. The protein resides in the nucleus. As a positive regulator of collagen fibrillogenesis, it is probably involved in the organization and remodeling of the extracellular matrix. In terms of biological role, may positively regulate MAP-kinase activity in adipocytes, leading to enhanced adipocyte proliferation and reduced adipocyte differentiation. May also positively regulate NF-kappa-B activity in macrophages by promoting the phosphorylation and subsequent degradation of I-kappa-B-alpha (NFKBIA), leading to enhanced macrophage inflammatory responsiveness. Can act as a transcriptional repressor. The protein is Adipocyte enhancer-binding protein 1 (AEBP1) of Homo sapiens (Human).